The primary structure comprises 518 residues: MAAAALRPPAQGTVTFEDVAVNFSQEEWSLLSEAQRCLYHDVMLENLTLISSLGCWYGAKDETPSKQTLSIQQESPLRTHWTGVCTKKVHLWGMCGPLLGDILHQGTQHNQKLNGFGAYEKKLDDDANHHQDQKQHIGEKSYRSNAKGTSFVKNCKFHMSHEPFIFHEVGKDFLSSLRLLQQEDIHTSGKSNFETKHGIPLQGGKTHYICGESTIPFSNKHSLVLHQRLLPREGPYVCSDSGKFTSKSNSFNNHQGVRTGKRPYQCGQCDESFWYKAHLTEHQRVHTGERPYECGECDKSFSHKHSLVDHQRVHTGERPYECDECGKSFSHKRSLVHHQRVHTGERPYQCGECGKSFNHKCNLIQHQRVHTGERPFECTACGKLFRSNSHLKEHQRVHTGERPYECKECRKSFRYKSHLTEHQRVHTGERPYECRECGKCFHQKGSLIQHQQIHSGERPHECGECGKCFHQKGSLIRHQQIHSGERPHECGECGKCFRQKGNLIKHQRVHTGERHHEC.

The KRAB domain occupies 14 to 89; the sequence is VTFEDVAVNF…HWTGVCTKKV (76 aa). Glycyl lysine isopeptide (Lys-Gly) (interchain with G-Cter in SUMO2) cross-links involve residues lysine 171, lysine 196, lysine 220, and lysine 247. The C2H2-type 1; degenerate zinc finger occupies 208 to 230; sequence YICGESTIPFSNKHSLVLHQRLL. A C2H2-type 2; degenerate zinc finger spans residues 236-258; sequence YVCSDSGKFTSKSNSFNNHQGVR. C2H2-type zinc fingers lie at residues 264-286, 292-314, 320-342, 348-370, 376-398, 404-426, and 432-454; these read YQCG…QRVH, YECG…QRVH, YECD…QRVH, FECT…QRVH, YECK…QRVH, and YECR…QQIH. The segment at 460-482 adopts a C2H2-type 10; degenerate zinc-finger fold; the sequence is HECGECGKCFHQKGSLIRHQQIH. The segment at 488-510 adopts a C2H2-type 11 zinc-finger fold; it reads HECGECGKCFRQKGNLIKHQRVH.

It belongs to the krueppel C2H2-type zinc-finger protein family.

The protein resides in the nucleus. Its function is as follows. May be involved in transcriptional regulation. This Homo sapiens (Human) protein is Zinc finger protein 776 (ZNF776).